The sequence spans 323 residues: Alpha-tubulin N-acetyltransferase 1 (323 aa).

Positions 1–190 (MEFPFDVDAL…NNFVIFEGFF (190 aa)) constitute an N-acetyltransferase domain. An N6-acetyllysine; by autocatalysis modification is found at Lys-56. Residue 124–137 (FYIHESVQRHGHGR) coordinates acetyl-CoA. N6-acetyllysine; by autocatalysis is present on Lys-146. 160 to 169 (SQKLLKFLNK) is an acetyl-CoA binding site. The interval 196–239 (PPAPSLRATRHSRAAAVDPTPTAPARKLPPKRAEGDIKPYSSSD) is disordered. The span at 209-220 (AAAVDPTPTAPA) shows a compositional bias: low complexity. The span at 226 to 239 (KRAEGDIKPYSSSD) shows a compositional bias: basic and acidic residues. N6-acetyllysine; by autocatalysis occurs at positions 233 and 244. The segment at 252–287 (PLNRAPRRATPPAHPPPRSSSLGNSPERGPLRPFVP) is disordered. A phosphoserine mark is found at Ser-272 and Ser-276. An Asymmetric dimethylarginine modification is found at Arg-305. Position 315 is a phosphoserine (Ser-315). An Omega-N-methylarginine modification is found at Arg-323.

This sequence belongs to the acetyltransferase ATAT1 family. As to quaternary structure, component of the BBSome complex. Interacts with AP2 alpha-adaptins, including AP2A2, but not with AP1 gamma-adaptin (AP1G1/AP1G2); this interaction is required for efficient alpha-tubulin acetylation, hence clathrin-coated pits are sites of microtubule acetylation. Post-translationally, autoacetylation strongly increases tubulin acetylation.

It localises to the cytoplasm. The protein localises to the membrane. It is found in the clathrin-coated pit. Its subcellular location is the cell junction. The protein resides in the focal adhesion. It localises to the cell projection. The protein localises to the axon. It is found in the cytoskeleton. Its subcellular location is the spindle. It carries out the reaction L-lysyl-[alpha-tubulin] + acetyl-CoA = N(6)-acetyl-L-lysyl-[alpha-tubulin] + CoA + H(+). Specifically acetylates 'Lys-40' in alpha-tubulin on the lumenal side of microtubules. Promotes microtubule destabilization and accelerates microtubule dynamics; this activity may be independent of acetylation activity. Acetylates alpha-tubulin with a slow enzymatic rate, due to a catalytic site that is not optimized for acetyl transfer. Enters the microtubule through each end and diffuses quickly throughout the lumen of microtubules. Acetylates only long/old microtubules because of its slow acetylation rate since it does not have time to act on dynamically unstable microtubules before the enzyme is released. Required for normal sperm flagellar function. Promotes directional cell locomotion and chemotaxis, through AP2A2-dependent acetylation of alpha-tubulin at clathrin-coated pits that are concentrated at the leading edge of migrating cells. May facilitate primary cilium assembly. The protein is Alpha-tubulin N-acetyltransferase 1 of Macaca mulatta (Rhesus macaque).